The sequence spans 223 residues: Ras-related protein Rab-21 (223 aa).

Alanine 2 carries the post-translational modification N-acetylalanine. GTP contacts are provided by glycine 26, glycine 29, lysine 30, threonine 31, serine 32, asparagine 43, aspartate 44, histidine 46, threonine 48, and threonine 49. Threonine 31 lines the Mg(2+) pocket. Positions 41–54 (KFNDKHITTLQASF) match the Switch 1 motif. The Mg(2+) site is built by threonine 49 and aspartate 72. The Switch 2 signature appears at 74-92 (AGQERFHALGPIYYRDSNG). Positions 75, 130, 131, 133, 161, and 162 each coordinate GTP. Residues cysteine 219 and cysteine 220 are each lipidated (S-geranylgeranyl cysteine). A Cysteine methyl ester modification is found at cysteine 220. A propeptide spans 221–223 (SSG) (removed in mature form).

Belongs to the small GTPase superfamily. Rab family. In terms of assembly, interacts with the cytoplasmic tail of integrins ITGA1, ITGA2, ITGA5, ITGA6, ITGA11 and ITGB1; this interaction is dependent upon its GDP/GTP cycle. Interacts with ANKRD27. Interacts (active GTP-bound form) with TMED10; the interaction is indirect and regulates TMED10 abundance and localization at the Golgi. It depends on Mg(2+) as a cofactor.

The protein localises to the endoplasmic reticulum membrane. It localises to the golgi apparatus. The protein resides in the trans-Golgi network. Its subcellular location is the golgi apparatus membrane. It is found in the early endosome membrane. The protein localises to the cytoplasmic vesicle membrane. It localises to the cleavage furrow. The protein resides in the cell projection. Its subcellular location is the neuron projection. It catalyses the reaction GTP + H2O = GDP + phosphate + H(+). Regulated by guanine nucleotide exchange factors (GEFs) including ANKRD27 and RABGEF1, which promote the exchange of bound GDP for free GTP. Regulated by GTPase activating proteins (GAPs) which increase the GTP hydrolysis activity. Inhibited by GDP dissociation inhibitors (GDIs). Its function is as follows. The small GTPases Rab are key regulators of intracellular membrane trafficking, from the formation of transport vesicles to their fusion with membranes. Rabs cycle between an inactive GDP-bound form and an active GTP-bound form that is able to recruit to membranes different sets of downstream effectors directly responsible for vesicle formation, movement, tethering and fusion. RAB21 is involved in membrane trafficking control. Regulates integrin internalization and recycling, but does not influence the traffic of endosomally translocated receptors in general. As a result, may regulate cell adhesion and migration. During the mitosis of adherent cells, controls the endosomal trafficking of integrins which is required for the successful completion of cytokinesis. Involved in neurite growth. Modulates protein levels of the cargo receptors TMED2 and TMED10, and required for appropriate Golgi localization of TMED10. In Canis lupus familiaris (Dog), this protein is Ras-related protein Rab-21 (RAB21).